The following is an 815-amino-acid chain: Translation initiation factor IF-2 (815 aa).

Basic and acidic residues predominate over residues 153 to 176 (VQEKEAEKKVEKLKTADKPKEGNK). Residues 153–219 (VQEKEAEKKV…THLSQKIQAE (67 aa)) are disordered. The span at 191–209 (KQLHVARHNPNRRLKKKDR) shows a compositional bias: basic residues. Positions 315–482 (ARPPIVTIMG…AISLTAEILE (168 aa)) constitute a tr-type G domain. The interval 324-331 (GHVDHGKT) is G1. 324–331 (GHVDHGKT) serves as a coordination point for GTP. Residues 349–353 (GITQH) are G2. The interval 370-373 (DTPG) is G3. GTP contacts are provided by residues 370 to 374 (DTPGH) and 424 to 427 (NKID). A G4 region spans residues 424 to 427 (NKID). Positions 460-462 (SAH) are G5.

Belongs to the TRAFAC class translation factor GTPase superfamily. Classic translation factor GTPase family. IF-2 subfamily.

The protein localises to the cytoplasm. Functionally, one of the essential components for the initiation of protein synthesis. Protects formylmethionyl-tRNA from spontaneous hydrolysis and promotes its binding to the 30S ribosomal subunits. Also involved in the hydrolysis of GTP during the formation of the 70S ribosomal complex. The chain is Translation initiation factor IF-2 from Vesicomyosocius okutanii subsp. Calyptogena okutanii (strain HA).